An 844-amino-acid polypeptide reads, in one-letter code: Bifunctional abietadiene synthase, chloroplastic (844 aa).

The N-terminal 46 residues, 1–46 (QSIPHFSTTLNAGSSARKRRSLYLRWGKGSNKIIACVGEGATSVPY), are a transit peptide targeting the chloroplast. Lys245 lines the substrate pocket. Positions 378 and 380 each coordinate Mg(2+). Positions 378-381 (DIDD) match the DXDD motif motif. Lys465 is a binding site for substrate. Positions 597, 601, 741, 745, and 749 each coordinate Mg(2+). The short motif at 597 to 601 (DDLYD) is the DDXXD motif element.

The protein belongs to the terpene synthase family. Tpsd subfamily. Monomer. Mg(2+) is required as a cofactor.

It localises to the plastid. The protein resides in the chloroplast. It carries out the reaction (2E,6E,10E)-geranylgeranyl diphosphate = (+)-copalyl diphosphate. The catalysed reaction is (+)-copalyl diphosphate = abieta-7,13-diene + diphosphate. The enzyme catalyses (+)-copalyl diphosphate = neoabietadiene + diphosphate. It catalyses the reaction (+)-copalyl diphosphate = abieta-8(14),12-diene + diphosphate. It participates in terpene metabolism; oleoresin biosynthesis. Its function is as follows. Involved in defensive oleoresin formation in conifers in response to insect attack or other injury. Involved in diterpene (C20) olefins biosynthesis. Bifunctional enzyme that catalyzes two sequential cyclizations of geranylgeranyl diphosphate (GGPP) to abietadiene. The copalyl diphosphate (CPP) intermediate diffuses freely between the 2 active sites in the enzyme. In Abies balsamea (Balsam fir), this protein is Bifunctional abietadiene synthase, chloroplastic (LAS).